We begin with the raw amino-acid sequence, 126 residues long: UPF0538 protein C2orf76 homolog (126 aa).

It belongs to the UPF0538 family.

In Bos taurus (Bovine), this protein is UPF0538 protein C2orf76 homolog.